Consider the following 555-residue polypeptide: Protein FAM234A (555 aa).

The span at 1 to 22 (MMDNKDLEAEIHPLKNEDKKSQ) shows a compositional bias: basic and acidic residues. The disordered stretch occupies residues 1 to 40 (MMDNKDLEAEIHPLKNEDKKSQENPGNLPRNEDNLKSKPV). Topologically, residues 1 to 49 (MMDNKDLEAEIHPLKNEDKKSQENPGNLPRNEDNLKSKPVPSRLSRCRT) are cytoplasmic. Serine 21 is subject to Phosphoserine. A helical; Signal-anchor for type II membrane protein membrane pass occupies residues 50-70 (VAFFLSLFTCLFVVFVLSFII). Topologically, residues 71 to 555 (PCPDRPSSQG…FSRLRYRSEM (485 aa)) are extracellular. N-linked (GlcNAc...) asparagine glycans are attached at residues asparagine 116, asparagine 120, asparagine 317, asparagine 392, and asparagine 476.

Belongs to the FAM234 family.

The protein resides in the membrane. The polypeptide is Protein FAM234A (Mus musculus (Mouse)).